Reading from the N-terminus, the 208-residue chain is Ribosomal RNA small subunit methyltransferase G (208 aa).

S-adenosyl-L-methionine is bound by residues Gly-76, Leu-81, 127–128 (VE), and Arg-142.

This sequence belongs to the methyltransferase superfamily. RNA methyltransferase RsmG family.

It localises to the cytoplasm. The catalysed reaction is guanosine(527) in 16S rRNA + S-adenosyl-L-methionine = N(7)-methylguanosine(527) in 16S rRNA + S-adenosyl-L-homocysteine. In terms of biological role, specifically methylates the N7 position of guanine in position 527 of 16S rRNA. This Legionella pneumophila subsp. pneumophila (strain Philadelphia 1 / ATCC 33152 / DSM 7513) protein is Ribosomal RNA small subunit methyltransferase G.